We begin with the raw amino-acid sequence, 29 residues long: Cyclotide vibi-B (29 aa).

The segment at residues 1 to 29 (GLPVCGETCFGGTCNTPGCTCSYPICTRN) is a cross-link (cyclopeptide (Gly-Asn)). 3 disulfides stabilise this stretch: Cys-5-Cys-19, Cys-9-Cys-21, and Cys-14-Cys-26.

Post-translationally, this is a cyclic peptide.

Probably participates in a plant defense mechanism. The chain is Cyclotide vibi-B from Viola biflora (Yellow wood violet).